The sequence spans 4047 residues: Cubilin homolog (4047 aa).

Positions 1 to 22 are cleaved as a signal peptide; the sequence is MIPNLQLFLSLILFGLLNHVSS. N-linked (GlcNAc...) asparagine glycans are attached at residues N56, N92, and N127. The EGF-like 1 domain maps to 168-205; that stretch reads AINACDPNKCSNGGTCIPSFGAKFTCLCPPHFTGTTCE. 26 disulfide bridges follow: C172–C183, C177–C193, C195–C204, C211–C227, C221–C236, C238–C247, C310–C321, C315–C330, C333–C344, C350–C363, C357–C372, C375–C386, C392–C403, C397–C418, C420–C434, C442–C453, C447–C463, C465–C474, C480–C491, C485–C500, C502–C511, C518–C544, C577–C601, C645–C667, C696–C719, and C769–C801. One can recognise an EGF-like 2; calcium-binding domain in the interval 207-248; sequence DIDECSVYNGTTAGCQNNGTCINNRGGFECQCQSGYHGSLCQ. Residues N215 and N224 are each glycosylated (N-linked (GlcNAc...) asparagine). The EGF-like 3; calcium-binding domain occupies 306–345; that stretch reads DVNECESNPCHPGVDCINLPGSFVCSGCPKGYKTDGNVCI. The EGF-like 4; calcium-binding domain maps to 346-387; sequence DVNECEGEIRVCSPLSKCHNTLGSYYCDSCPTGYSGDGGNCV. 3 consecutive EGF-like domains span residues 388–435, 438–475, and 476–512; these read KDDS…EGCV, ASNVCQNHNCVNAGKCKPTSDTEYKCECEAGFLGKFCE, and KTSPCQTNPCKNGGTCIAVENSAYCDCPEHFFGRACE. CUB domains follow at residues 518 to 641, 645 to 763, 769 to 934, 934 to 1061, 1065 to 1182, 1188 to 1300, 1304 to 1427, 1428 to 1558, 1560 to 1680, and 1691 to 1841; these read CGSH…WETV, CGYR…YKFT, CGAE…YEML, LCEK…YKTS, CGGV…FEAV, CDFT…YETI, CGGR…FTTL, CNGI…WNTL, CSRD…VEFV, and CGQV…MIPK. Residues N528, N537, and N583 are each glycosylated (N-linked (GlcNAc...) asparagine). N-linked (GlcNAc...) asparagine glycans are attached at residues N775, N806, and N811. C877 and C896 form a disulfide bridge. N-linked (GlcNAc...) asparagine glycosylation is present at N942. Disulfide bonds link C1065–C1091, C1120–C1145, and C1188–C1211. N1133 carries an N-linked (GlcNAc...) asparagine glycan. Residue N1229 is glycosylated (N-linked (GlcNAc...) asparagine). C1234 and C1262 are oxidised to a cystine. A glycan (N-linked (GlcNAc...) asparagine) is linked at N1294. An intrachain disulfide couples C1304 to C1330. N1353 is a glycosylation site (N-linked (GlcNAc...) asparagine). Intrachain disulfides connect C1428-C1455, C1488-C1522, and C1560-C1586. The N-linked (GlcNAc...) asparagine glycan is linked to N1513. 4 N-linked (GlcNAc...) asparagine glycosylation sites follow: N1613, N1631, N1648, and N1674. Residues C1614 and C1641 are joined by a disulfide bond. C1691 and C1720 are disulfide-bonded. N-linked (GlcNAc...) asparagine glycosylation is found at N1762, N1782, N1866, and N1890. A disulfide bridge links C1955 with C1979. The 129-residue stretch at 1955-2083 folds into the CUB 11 domain; it reads CGGEVRHSQG…PLFKARYEKV (129 aa). Residues N2005, N2016, and N2017 are each glycosylated (N-linked (GlcNAc...) asparagine). Residues C2006 and C2027 are joined by a disulfide bond. The interval 2052-2071 is disordered; sequence ASDGNDDDDDTPDIDQQDSN. Acidic residues predominate over residues 2055–2067; it reads GNDDDDDTPDIDQ. N2193 carries N-linked (GlcNAc...) asparagine glycosylation. 2 cysteine pairs are disulfide-bonded: C2207–C2238 and C2265–C2295. 5 consecutive CUB domains span residues 2207–2334, 2335–2463, 2467–2588, 2590–2717, and 2721–2859; these read CGGD…YRLT, CNSF…IKEQ, CPSG…YGIA, CGGT…VTMS, and CGGR…YMAI. N-linked (GlcNAc...) asparagine glycans are attached at residues N2301 and N2305. Cystine bridges form between C2335–C2368 and C2395–C2424. N-linked (GlcNAc...) asparagine glycosylation is present at N2434. 2 disulfides stabilise this stretch: C2467-C2498 and C2590-C2619. N-linked (GlcNAc...) asparagine glycosylation is found at N2599, N2645, N2657, and N2692. C2646 and C2668 are disulfide-bonded. Disulfide bonds link C2721-C2747 and C2786-C2809. N-linked (GlcNAc...) asparagine glycosylation is found at N2811, N2845, N2875, and N2988. 4 disulfide bridges follow: C2996/C3025, C3052/C3074, C3127/C3154, and C3181/C3217. 7 CUB domains span residues 2996-3121, 3127-3254, 3255-3385, 3387-3508, 3515-3641, 3645-3783, and 3786-3900; these read CGGV…YEFL, CGYH…WEAE, CGAI…YSIN, CGDN…VISS, CGGK…YSIV, CGGW…YNIL, and CNRT…YYTV. The N-linked (GlcNAc...) asparagine glycan is linked to N3235. Intrachain disulfides connect C3255–C3281, C3315–C3335, and C3387–C3418. N-linked (GlcNAc...) asparagine glycans are attached at residues N3421 and N3461. 2 cysteine pairs are disulfide-bonded: C3445–C3468 and C3515–C3544. N3635 carries an N-linked (GlcNAc...) asparagine glycan. 2 disulfides stabilise this stretch: C3645/C3680 and C3708/C3742. 5 N-linked (GlcNAc...) asparagine glycosylation sites follow: N3770, N3787, N3812, N3858, and N3930. Cystine bridges form between C3786/C3815 and C3845/C3863.

The protein resides in the secreted. Cotransporter which plays a role in lipoprotein, vitamin and iron metabolism, by facilitating their uptake. The polypeptide is Cubilin homolog (Caenorhabditis elegans).